A 295-amino-acid polypeptide reads, in one-letter code: uncharacterized protein (295 aa).

One can recognise a Sigma-54 factor interaction domain in the interval 4 to 233 (IVVKSMAMEK…LQNTIERLVL (230 aa)).

This is an uncharacterized protein from Pseudomonas sp. (strain NS671).